Reading from the N-terminus, the 680-residue chain is Methionine--tRNA ligase (680 aa).

Positions Pro14–His24 match the 'HIGH' region motif. The Zn(2+) site is built by Cys145, Cys148, Cys158, and Cys161. Positions Lys330–Ser334 match the 'KMSKS' region motif. Residue Lys333 coordinates ATP. Residues Asp579–Lys680 enclose the tRNA-binding domain.

Belongs to the class-I aminoacyl-tRNA synthetase family. MetG type 1 subfamily. In terms of assembly, homodimer. Zn(2+) serves as cofactor.

It is found in the cytoplasm. It carries out the reaction tRNA(Met) + L-methionine + ATP = L-methionyl-tRNA(Met) + AMP + diphosphate. Functionally, is required not only for elongation of protein synthesis but also for the initiation of all mRNA translation through initiator tRNA(fMet) aminoacylation. The polypeptide is Methionine--tRNA ligase (Hydrogenovibrio crunogenus (strain DSM 25203 / XCL-2) (Thiomicrospira crunogena)).